The chain runs to 306 residues: Protein YIPF1 (306 aa).

The Cytoplasmic segment spans residues 1 to 119 (MAAVDDLQFE…VRLYIRSNPD (119 aa)). The tract at residues 30–63 (IEDPSVSFGHQPRPPGSVGREEDEELLGNNDSDE) is disordered. Residues 50–63 (EEDEELLGNNDSDE) show a composition bias toward acidic residues. Residues 120-140 (LYGPFWICATLVFAIAISGNL) traverse the membrane as a helical segment. At 141–162 (SNFLIHLGEKTYHYVPEFQKVS) the chain is on the lumenal side. The helical transmembrane segment at 163-183 (IAATVIYAYAWLVPLALWGFL) threads the bilayer. The Cytoplasmic portion of the chain corresponds to 184–200 (LWRNSKVMSMVSYSFLE). The helical transmembrane segment at 201-221 (IVCVYGYSLFIYIPTAVLWII) threads the bilayer. At 222-227 (PQRVVR) the chain is on the lumenal side. Residues 228–248 (WVLVMIALGVSGSVLVMTFWP) form a helical membrane-spanning segment. Residues 249 to 256 (AVREDNRR) lie on the Cytoplasmic side of the membrane. The helical transmembrane segment at 257 to 277 (VALATIVTIVLLHVLLSVGCL) threads the bilayer. Over 278–306 (AYFFDAPEMDHLPAAITTPNQTVTAAKSS) the chain is Lumenal. Asparagine 297 carries an N-linked (GlcNAc...) asparagine glycan.

It belongs to the YIP1 family. As to quaternary structure, interacts with YIPF6; this interaction may stabilize YIPF1. May also form a ternary complex with YIPF2 and YIPF6.

The protein localises to the golgi apparatus. Its subcellular location is the cis-Golgi network membrane. The protein resides in the trans-Golgi network membrane. It localises to the late endosome membrane. The polypeptide is Protein YIPF1 (Yipf1) (Mus musculus (Mouse)).